The primary structure comprises 179 residues: MTLVVGLGNIGEQYAQTRHNVGFMLIDLLLKDLEVAKLSNTKFKGELFKSSLAFFLKPSTYMNLSGESVKAVSDFYKCDRIIVIHDDIDLNLGTLKFKIGGSSGGHNGLKSIDNLCGNAYERVRIGVGKDQDVISHVLGKFKQEEQESLNKVLEQAKKALFELLKSNIEQVASKYSIRN.

Tyr-14 serves as a coordination point for tRNA. The Proton acceptor role is filled by His-19. TRNA contacts are provided by Tyr-61, Asn-63, and Asn-107.

Belongs to the PTH family. In terms of assembly, monomer.

The protein resides in the cytoplasm. It catalyses the reaction an N-acyl-L-alpha-aminoacyl-tRNA + H2O = an N-acyl-L-amino acid + a tRNA + H(+). Its function is as follows. Hydrolyzes ribosome-free peptidyl-tRNAs (with 1 or more amino acids incorporated), which drop off the ribosome during protein synthesis, or as a result of ribosome stalling. In terms of biological role, catalyzes the release of premature peptidyl moieties from peptidyl-tRNA molecules trapped in stalled 50S ribosomal subunits, and thus maintains levels of free tRNAs and 50S ribosomes. This chain is Peptidyl-tRNA hydrolase, found in Campylobacter lari (strain RM2100 / D67 / ATCC BAA-1060).